The primary structure comprises 406 residues: Argininosuccinate synthase (406 aa).

ATP is bound by residues 11–19 (AYSGGLDTS) and Ala-38. L-citrulline-binding residues include Tyr-91 and Ser-96. Gly-121 contacts ATP. Residues Thr-123, Asn-127, and Asp-128 each contribute to the L-aspartate site. Asn-127 contacts L-citrulline. L-citrulline contacts are provided by Arg-131, Ser-181, Ser-190, Glu-266, and Tyr-278.

Belongs to the argininosuccinate synthase family. Type 1 subfamily. In terms of assembly, homotetramer.

The protein resides in the cytoplasm. It catalyses the reaction L-citrulline + L-aspartate + ATP = 2-(N(omega)-L-arginino)succinate + AMP + diphosphate + H(+). The protein operates within amino-acid biosynthesis; L-arginine biosynthesis; L-arginine from L-ornithine and carbamoyl phosphate: step 2/3. This chain is Argininosuccinate synthase, found in Campylobacter hominis (strain ATCC BAA-381 / DSM 21671 / CCUG 45161 / LMG 19568 / NCTC 13146 / CH001A).